A 359-amino-acid chain; its full sequence is 5-amino-6-(D-ribitylamino)uracil--L-tyrosine 4-hydroxyphenyl transferase (359 aa).

Positions 45–282 (VTYVVNANIN…TYAISRIFFK (238 aa)) constitute a Radical SAM core domain. [4Fe-4S] cluster contacts are provided by C59, C63, and C66.

It belongs to the radical SAM superfamily. CofH family. In terms of assembly, consists of two subunits, CofG and CofH. [4Fe-4S] cluster serves as cofactor.

It carries out the reaction 5-amino-6-(D-ribitylamino)uracil + L-tyrosine + S-adenosyl-L-methionine = 5-amino-5-(4-hydroxybenzyl)-6-(D-ribitylimino)-5,6-dihydrouracil + 2-iminoacetate + 5'-deoxyadenosine + L-methionine + H(+). The protein operates within cofactor biosynthesis; coenzyme F0 biosynthesis. Functionally, catalyzes the radical-mediated synthesis of 5-amino-5-(4-hydroxybenzyl)-6-(D-ribitylimino)-5,6-dihydrouracil from 5-amino-6-(D-ribitylamino)uracil and L-tyrosine. The polypeptide is 5-amino-6-(D-ribitylamino)uracil--L-tyrosine 4-hydroxyphenyl transferase (Methanococcus maripaludis (strain C5 / ATCC BAA-1333)).